The sequence spans 453 residues: Phosphoglucosamine mutase (453 aa).

The active-site Phosphoserine intermediate is the serine 110. Mg(2+) contacts are provided by serine 110, aspartate 248, aspartate 250, and aspartate 252. Residue serine 110 is modified to Phosphoserine.

The protein belongs to the phosphohexose mutase family. Requires Mg(2+) as cofactor. Post-translationally, activated by phosphorylation.

It carries out the reaction alpha-D-glucosamine 1-phosphate = D-glucosamine 6-phosphate. Its function is as follows. Catalyzes the conversion of glucosamine-6-phosphate to glucosamine-1-phosphate. The sequence is that of Phosphoglucosamine mutase from Mycolicibacterium smegmatis (strain ATCC 700084 / mc(2)155) (Mycobacterium smegmatis).